The chain runs to 722 residues: Polymerase basic protein 2 (722 aa).

As to quaternary structure, the RNA polymerase is composed of three subunits: PB1, PB2 and PA.

It is found in the virion. Its subcellular location is the host nucleus. Functionally, involved in transcription initiation and cap-stealing mechanism, in which cellular capped pre-mRNA are used to generate primers for viral transcription. Binds the cap of the target pre-RNA which is subsequently cleaved by PB1. May play a role in genome replication. This Gadus morhua (Atlantic cod) protein is Polymerase basic protein 2.